Reading from the N-terminus, the 123-residue chain is NADH-quinone oxidoreductase subunit A (123 aa).

The next 3 membrane-spanning stretches (helical) occupy residues 11-31 (YLPIAIFFGIAVLVSGLIMML), 68-88 (LVAILFIIFDLEITFLVPWAI), and 93-113 (IGKIGFFSMMFFLFVLIIGFI).

Belongs to the complex I subunit 3 family. In terms of assembly, NDH-1 is composed of 14 different subunits. Subunits NuoA, H, J, K, L, M, N constitute the membrane sector of the complex.

The protein localises to the cell inner membrane. It catalyses the reaction a quinone + NADH + 5 H(+)(in) = a quinol + NAD(+) + 4 H(+)(out). Functionally, NDH-1 shuttles electrons from NADH, via FMN and iron-sulfur (Fe-S) centers, to quinones in the respiratory chain. The immediate electron acceptor for the enzyme in this species is believed to be ubiquinone. Couples the redox reaction to proton translocation (for every two electrons transferred, four hydrogen ions are translocated across the cytoplasmic membrane), and thus conserves the redox energy in a proton gradient. This chain is NADH-quinone oxidoreductase subunit A, found in Rickettsia typhi (strain ATCC VR-144 / Wilmington).